The chain runs to 183 residues: Inner membrane-spanning protein YciB (183 aa).

The next 5 membrane-spanning stretches (helical) occupy residues 19-39, 53-73, 76-96, 121-141, and 151-171; these read LYGV…QLIV, IMGI…DLNF, WKVT…QFVF, LGWA…SYYF, and TFGF…YLYP.

Belongs to the YciB family.

Its subcellular location is the cell inner membrane. Functionally, plays a role in cell envelope biogenesis, maintenance of cell envelope integrity and membrane homeostasis. This is Inner membrane-spanning protein YciB from Actinobacillus pleuropneumoniae serotype 5b (strain L20).